The following is a 291-amino-acid chain: Transmembrane O-methyltransferase (291 aa).

A helical membrane pass occupies residues 31–51; that stretch reads VGTMSPAIALAFLPLVVTLLV. Residues glutamate 137, 139-140, serine 145, glutamate 163, and serine 193 contribute to the S-adenosyl-L-methionine site; that span reads GT.

It belongs to the class I-like SAM-binding methyltransferase superfamily. Cation-dependent O-methyltransferase family. In terms of assembly, interacts with LHFPL5, PCDH15, TMC1, TMC2 and TMIE. Interacts directly with TMC1. The interaction of TOMT with TMC1 and TMC2 is required for the transportation of TMC1/2 into the stereocilia of hair cells.

It localises to the membrane. The protein localises to the cytoplasm. The protein resides in the endoplasmic reticulum. It catalyses the reaction a catechol + S-adenosyl-L-methionine = a guaiacol + S-adenosyl-L-homocysteine + H(+). Its function is as follows. Catalyzes the O-methylation, and thereby the inactivation, of catecholamine neurotransmitters and catechol hormones. Required for auditory function. Component of the cochlear hair cell's mechanotransduction (MET) machinery. Involved in the assembly of the asymmetric tip-link MET complex. Required for transportation of TMC1 and TMC2 proteins into the mechanically sensitive stereocilia of the hair cells. The function in MET is independent of the enzymatic activity. The protein is Transmembrane O-methyltransferase of Homo sapiens (Human).